Here is a 541-residue protein sequence, read N- to C-terminus: RING finger protein 37 (541 aa).

One can recognise a U-box domain in the interval 258–338 (DVPEEFLDPI…DHFLLQHSIP (81 aa)). Arg451 is subject to Asymmetric dimethylarginine. Residues 483–528 (CASCKRVFSPYFKKEPVYQLPCGHLLCRPCLGEKQRSLPMTCTACQ) form an RING-type zinc finger.

As to quaternary structure, interacts with UBE2L3. Interacts with VCP. Expressed in liver, heart, brain, kidney and testis.

Its subcellular location is the nucleus. It catalyses the reaction S-ubiquitinyl-[E2 ubiquitin-conjugating enzyme]-L-cysteine + [acceptor protein]-L-lysine = [E2 ubiquitin-conjugating enzyme]-L-cysteine + N(6)-ubiquitinyl-[acceptor protein]-L-lysine.. The protein operates within protein modification; protein ubiquitination. Its function is as follows. May have a ubiquitin-protein ligase activity acting as an E3 ubiquitin-protein ligase or as a ubiquitin-ubiquitin ligase promoting elongation of ubiquitin chains on substrates. The protein is RING finger protein 37 of Homo sapiens (Human).